Reading from the N-terminus, the 375-residue chain is Digeranylgeranylglycerophospholipid reductase 1 (375 aa).

Residues alanine 13, glutamate 32, cysteine 43, alanine 44, glycine 46, arginine 92, alanine 116, aspartate 275, glycine 287, and leucine 288 each contribute to the FAD site. Glycine 367 contacts a 2,3-bis-O-(geranylgeranyl)-sn-glycerol 1-phospholipid.

Belongs to the geranylgeranyl reductase family. DGGGPL reductase subfamily. FAD is required as a cofactor.

The catalysed reaction is a 2,3-bis-O-phytanyl-sn-glycerol 1-phospholipid + 8 A = a 2,3-bis-O-(geranylgeranyl)-sn-glycerol 1-phospholipid + 8 AH2. The enzyme catalyses 2,3-bis-O-(phytanyl)-sn-glycerol 1-phosphate + 8 A = 2,3-bis-O-(geranylgeranyl)-sn-glycerol 1-phosphate + 8 AH2. It catalyses the reaction CDP-2,3-bis-O-(geranylgeranyl)-sn-glycerol + 8 AH2 = CDP-2,3-bis-O-(phytanyl)-sn-glycerol + 8 A. It carries out the reaction archaetidylserine + 8 AH2 = 2,3-bis-O-phytanyl-sn-glycero-3-phospho-L-serine + 8 A. The protein operates within membrane lipid metabolism; glycerophospholipid metabolism. In terms of biological role, is involved in the reduction of 2,3-digeranylgeranylglycerophospholipids (unsaturated archaeols) into 2,3-diphytanylglycerophospholipids (saturated archaeols) in the biosynthesis of archaeal membrane lipids. Catalyzes the formation of archaetidic acid (2,3-di-O-phytanyl-sn-glyceryl phosphate) from 2,3-di-O-geranylgeranylglyceryl phosphate (DGGGP) via the hydrogenation of each double bond of the isoprenoid chains. Is also probably able to reduce double bonds of geranyl groups in CDP-2,3-bis-O-(geranylgeranyl)-sn-glycerol and archaetidylserine, thus acting at various stages in the biosynthesis of archaeal membrane lipids. This is Digeranylgeranylglycerophospholipid reductase 1 from Methanopyrus kandleri (strain AV19 / DSM 6324 / JCM 9639 / NBRC 100938).